Consider the following 176-residue polypeptide: Large ribosomal subunit protein uL10 (176 aa).

Belongs to the universal ribosomal protein uL10 family. In terms of assembly, part of the ribosomal stalk of the 50S ribosomal subunit. The N-terminus interacts with L11 and the large rRNA to form the base of the stalk. The C-terminus forms an elongated spine to which L12 dimers bind in a sequential fashion forming a multimeric L10(L12)X complex.

Its function is as follows. Forms part of the ribosomal stalk, playing a central role in the interaction of the ribosome with GTP-bound translation factors. The sequence is that of Large ribosomal subunit protein uL10 (rplJ) from Streptomyces antibioticus.